Reading from the N-terminus, the 326-residue chain is Isopenicillin N synthase (326 aa).

3 residues coordinate isopenicillin N: arginine 84, tyrosine 88, and tyrosine 186. N-[(5S)-5-amino-5-carboxypentanoyl]-L-cysteinyl-D-valine-binding residues include arginine 84, tyrosine 88, tyrosine 186, histidine 209, and aspartate 211. Positions 183 to 283 constitute a Fe2OG dioxygenase domain; sequence LIRYPFLENY…RLSIPFFANL (101 aa). Positions 209, 211, and 265 each coordinate Fe(2+). Arginine 274 serves as a coordination point for 2-oxoglutarate. Isopenicillin N is bound at residue serine 276. Serine 276 provides a ligand contact to N-[(5S)-5-amino-5-carboxypentanoyl]-L-cysteinyl-D-valine.

This sequence belongs to the iron/ascorbate-dependent oxidoreductase family. Requires Fe cation as cofactor. It depends on L-ascorbate as a cofactor.

It carries out the reaction N-[(5S)-5-amino-5-carboxypentanoyl]-L-cysteinyl-D-valine + O2 = isopenicillin N + 2 H2O. It participates in antibiotic biosynthesis; penicillin G biosynthesis; penicillin G from L-alpha-aminoadipate and L-cysteine and L-valine: step 2/3. Removes, in the presence of oxygen, 4 hydrogen atoms from delta-L-(alpha-aminoadipyl)-L-cysteinyl-D-valine (ACV) to form the azetidinone and thiazolidine rings of isopenicillin. This chain is Isopenicillin N synthase (pcbC), found in Lysobacter lactamgenus.